The primary structure comprises 130 residues: Small ribosomal subunit protein uS8 (130 aa).

It belongs to the universal ribosomal protein uS8 family. Part of the 30S ribosomal subunit. Contacts proteins S5 and S12.

In terms of biological role, one of the primary rRNA binding proteins, it binds directly to 16S rRNA central domain where it helps coordinate assembly of the platform of the 30S subunit. This is Small ribosomal subunit protein uS8 from Haemophilus ducreyi (strain 35000HP / ATCC 700724).